The following is a 453-amino-acid chain: UDP-glycosyltransferase 76E1 (453 aa).

UDP-alpha-D-glucose is bound by residues serine 272, 331–333 (APQ), 348–356 (HCGWNSTLE), and 370–373 (TGDQ).

Belongs to the UDP-glycosyltransferase family.

In terms of biological role, possesses low quercetin 3-O-glucosyltransferase and 7-O-glucosyltransferase activities in vitro. In Arabidopsis thaliana (Mouse-ear cress), this protein is UDP-glycosyltransferase 76E1 (UGT76E1).